A 307-amino-acid chain; its full sequence is Elongation factor Ts (307 aa).

Residues 80–83 (TDFV) are involved in Mg(2+) ion dislocation from EF-Tu.

The protein belongs to the EF-Ts family.

The protein localises to the cytoplasm. Associates with the EF-Tu.GDP complex and induces the exchange of GDP to GTP. It remains bound to the aminoacyl-tRNA.EF-Tu.GTP complex up to the GTP hydrolysis stage on the ribosome. This Clostridium botulinum (strain 657 / Type Ba4) protein is Elongation factor Ts.